Reading from the N-terminus, the 310-residue chain is N-acetyl-gamma-glutamyl-phosphate reductase (310 aa).

The active site involves Cys117.

Belongs to the NAGSA dehydrogenase family. Type 2 subfamily.

It localises to the cytoplasm. It catalyses the reaction N-acetyl-L-glutamate 5-semialdehyde + phosphate + NADP(+) = N-acetyl-L-glutamyl 5-phosphate + NADPH + H(+). It participates in amino-acid biosynthesis; L-arginine biosynthesis; N(2)-acetyl-L-ornithine from L-glutamate: step 3/4. Catalyzes the NADPH-dependent reduction of N-acetyl-5-glutamyl phosphate to yield N-acetyl-L-glutamate 5-semialdehyde. This chain is N-acetyl-gamma-glutamyl-phosphate reductase, found in Brucella ovis (strain ATCC 25840 / 63/290 / NCTC 10512).